Consider the following 148-residue polypeptide: Transcriptional regulator MraZ (148 aa).

SpoVT-AbrB domains are found at residues 5–53 and 82–125; these read ETAI…AESE and AAHL…SEQA.

It belongs to the MraZ family. As to quaternary structure, forms oligomers.

It localises to the cytoplasm. The protein resides in the nucleoid. In Stenotrophomonas maltophilia (strain R551-3), this protein is Transcriptional regulator MraZ.